Here is a 62-residue protein sequence, read N- to C-terminus: MSDKNIRITQVRSIIGCTKKQKATIKSLGLGRPNYQVEKPDNPCTRGQVKVVQHIVKVEELS.

This sequence belongs to the universal ribosomal protein uL30 family. As to quaternary structure, part of the 50S ribosomal subunit.

The protein is Large ribosomal subunit protein uL30 of Prosthecochloris aestuarii (strain DSM 271 / SK 413).